A 552-amino-acid chain; its full sequence is Scaffold protein (552 aa).

It belongs to the poxviridae protein D13 family. In terms of assembly, homotrimer. Self-assembles to form a layer. Interacts with A17 (via N-terminus); this interaction is necessary for D13 association with membranes.

It is found in the membrane. Scaffold protein which forms a transitory spherical honeycomb lattice providing curvature and rigidity to the convex membrane of crescent and immature virions (IV). This association occurs concomitantly with viral membrane formation. Targeted by the drug rifampicin, which prevents the formation of this lattice, and hence virus morphogenesis. In the presence of rifampicin, irregularly shaped membranes that lack the honeycomb layer accumulate around areas of electron-dense viroplasm. This layer is lost from virions during maturation from IV to mature virion (MV), through the proteolysis of A17 N-terminus. This chain is Scaffold protein, found in Vertebrata (FPV).